The following is a 588-amino-acid chain: Methylcrotonoyl-CoA carboxylase beta chain, mitochondrial (588 aa).

The 258-residue stretch at 72-329 (MNSTLKQLKE…KKQPSPVITE (258 aa)) folds into the CoA carboxyltransferase N-terminal domain. The tract at residues 72-570 (MNSTLKQLKE…RKVIALSLSA (499 aa)) is carboxyltransferase. Residues 329–570 (ETEEPLYPTS…RKVIALSLSA (242 aa)) enclose the CoA carboxyltransferase C-terminal domain. Residues 366-395 (RFDEFKELYGTTLICGFARVHGMPVGIIAN) are acyl-CoA binding.

The protein belongs to the AccD/PCCB family. In terms of assembly, probably a dodecamer composed of six biotin-containing alpha subunits and six beta subunits.

Its subcellular location is the mitochondrion matrix. It carries out the reaction 3-methylbut-2-enoyl-CoA + hydrogencarbonate + ATP = 3-methyl-(2E)-glutaconyl-CoA + ADP + phosphate + H(+). Its pathway is amino-acid degradation; L-leucine degradation; (S)-3-hydroxy-3-methylglutaryl-CoA from 3-isovaleryl-CoA: step 2/3. Carboxyltransferase subunit of the 3-methylcrotonyl-CoA carboxylase, an enzyme that catalyzes the conversion of 3-methylcrotonyl-CoA to 3-methylglutaconyl-CoA, a critical step for leucine and isovaleric acid catabolism. The polypeptide is Methylcrotonoyl-CoA carboxylase beta chain, mitochondrial (mccb) (Dictyostelium discoideum (Social amoeba)).